The following is a 1148-amino-acid chain: Protocadherin-19 (1148 aa).

The first 21 residues, Met1–Ala21, serve as a signal peptide directing secretion. Cadherin domains are found at residues Leu22–Phe129, Pro130–Phe238, Ser239–Ile346, Ser350–Phe453, Ser454–Ile563, and Ile569–Met672. Over Leu22 to Ser678 the chain is Extracellular. Ca(2+) is bound by residues Glu31, Glu32, Asp88, and Asp90. An intrachain disulfide couples Cys93 to Cys99. 15 residues coordinate Ca(2+): Asp121, Asn123, Asp124, Asn125, Glu140, Asp155, Asp157, Glu199, Asp212, Asp230, Ser231, Asn232, Asp233, Asn234, and Glu249. N-linked (GlcNAc...) asparagine glycosylation is present at Asn261. The Ca(2+) site is built by Asp264, Asp266, Asn270, Asp305, Glu307, Asp338, Asn340, Asp341, Asn342, Glu360, Asp375, Asp377, Asn381, Asp412, and Glu414. A glycan (N-linked (GlcNAc...) asparagine) is linked at Asn420. Ca(2+)-binding residues include Asp427, Asp445, Glu446, Asn447, Asp448, Asn449, Glu464, Asp479, Asp481, Asn485, Asn522, Glu524, and Asp537. A glycan (N-linked (GlcNAc...) asparagine) is linked at Asn485. Asn546 carries an N-linked (GlcNAc...) asparagine glycan. Asp555, Val556, Asn557, Asp558, and Asn559 together coordinate Ca(2+). Asn570 carries an N-linked (GlcNAc...) asparagine glycan. The Ca(2+) site is built by Asp594, Asp596, Asn600, and Asp646. An N-linked (GlcNAc...) asparagine glycan is attached at Asn676. The helical transmembrane segment at Leu679 to Val699 threads the bilayer. Residues Ala700–Leu1148 are Cytoplasmic-facing. Disordered stretches follow at residues Gly901–Val921 and Asn1100–Leu1148. Basic and acidic residues-rich tracts occupy residues Asp906–Val921, Ser1109–His1123, and Lys1130–Leu1148.

As to quaternary structure, homodimer; antiparallel. In terms of tissue distribution, moderately expressed in all regions of the brain examined, with lowest levels found in the cerebellum. Moderate expression is also found in ovary, and low expression in all other tissues tested. Also detected in primary skin fibroblast.

It is found in the cell membrane. Functionally, calcium-dependent cell-adhesion protein. The sequence is that of Protocadherin-19 (PCDH19) from Homo sapiens (Human).